The sequence spans 81 residues: Polcalcin Syr v 3 (81 aa).

EF-hand domains follow at residues 3-38 and 41-73; these read EEVA…LGSV and EEIQ…NSGL. Positions 16, 18, 20, 22, 27, 51, 53, 55, and 62 each coordinate Ca(2+).

This chain is Polcalcin Syr v 3 (SYRV3), found in Syringa vulgaris (Common lilac).